We begin with the raw amino-acid sequence, 167 residues long: MAGVNDAIRDSVLFTTADSIISWSRRSALWPETFGIACCAIEMISAGCARYDLDRFGVVFRPSPRQSDVMIIAGTVTRKFAPVVRRLYDQMPEPRWVIAMGTCAISGGVYNTYAVVQGSETFVPVDVHVPGCPPRPEALMHGFLLLQEKIKKSRALTGTPLGRVIAS.

[4Fe-4S] cluster contacts are provided by Cys38, Cys39, Cys103, and Cys132.

Belongs to the complex I 20 kDa subunit family. In terms of assembly, NDH-1 is composed of 14 different subunits. Subunits NuoB, C, D, E, F, and G constitute the peripheral sector of the complex. The cofactor is [4Fe-4S] cluster.

It localises to the cell inner membrane. It carries out the reaction a quinone + NADH + 5 H(+)(in) = a quinol + NAD(+) + 4 H(+)(out). Functionally, NDH-1 shuttles electrons from NADH, via FMN and iron-sulfur (Fe-S) centers, to quinones in the respiratory chain. The immediate electron acceptor for the enzyme in this species is believed to be ubiquinone. Couples the redox reaction to proton translocation (for every two electrons transferred, four hydrogen ions are translocated across the cytoplasmic membrane), and thus conserves the redox energy in a proton gradient. The protein is NADH-quinone oxidoreductase subunit B 2 of Rhizobium meliloti (strain 1021) (Ensifer meliloti).